The following is a 92-amino-acid chain: Probable Fe(2+)-trafficking protein (92 aa).

Belongs to the Fe(2+)-trafficking protein family.

Could be a mediator in iron transactions between iron acquisition and iron-requiring processes, such as synthesis and/or repair of Fe-S clusters in biosynthetic enzymes. This is Probable Fe(2+)-trafficking protein from Xanthomonas oryzae pv. oryzae (strain MAFF 311018).